The chain runs to 142 residues: Universal stress protein C (142 aa).

The protein belongs to the universal stress protein A family.

The protein resides in the cytoplasm. Its function is as follows. Required for resistance to DNA-damaging agents. The sequence is that of Universal stress protein C (uspC) from Salmonella typhimurium (strain LT2 / SGSC1412 / ATCC 700720).